Reading from the N-terminus, the 2771-residue chain is Kinesin-like protein KIN-12D (2771 aa).

Basic and acidic residues-rich tracts occupy residues 1–13 (MSKETKLSRRDSD) and 40–54 (KNPKHECGSKIDRTP). Disordered stretches follow at residues 1–73 (MSKE…TPDK) and 117–139 (YSETNSTQNTPTKSVSKPPGSCY). The span at 118-131 (SETNSTQNTPTKSV) shows a compositional bias: polar residues. One can recognise a Kinesin motor domain in the interval 193 to 530 (NVQILIRVRP…LKFAQRAKLI (338 aa)). Residue 274 to 281 (GQTGSGKT) coordinates ATP. 3 microtubules-binding regions span residues 400–404 (SSRSH), 431–437 (VDLAGSE), and 479–483 (HIPYR). Coiled coils occupy residues 1033–1110 (AATA…NEME), 1267–1331 (ELKQ…MKEK), 1410–1505 (IILL…YVEN), 2108–2390 (ELED…EQVK), and 2512–2677 (RERD…LAQE). The span at 2727-2736 (LKGKAKSRRS) shows a compositional bias: basic residues. Residues 2727-2771 (LKGKAKSRRSRNPERKMPSMPSPRRSWSQSPRSMSQVPFFSSLDR) form a disordered region. The span at 2744-2762 (PSMPSPRRSWSQSPRSMSQ) shows a compositional bias: low complexity.

Belongs to the TRAFAC class myosin-kinesin ATPase superfamily. Kinesin family. KIN-12 subfamily. As to expression, expressed in tissues enriched in dividing cells, such as root meristems, root primordia, and leaf primordia/young leaves.

The protein resides in the cytoplasm. It localises to the cytoskeleton. Its subcellular location is the phragmoplast. Involved in the spatial control of cytokinesis by a proper phragmoplast guidance. The chain is Kinesin-like protein KIN-12D from Arabidopsis thaliana (Mouse-ear cress).